Here is a 295-residue protein sequence, read N- to C-terminus: Putative F-box protein At5g44220 (295 aa).

In terms of domain architecture, F-box spans 56-102; sequence STNSDLLPMDLIKEILKRLPAKTLARFLCVSKLWSSIIRSRDLMKLF.

This Arabidopsis thaliana (Mouse-ear cress) protein is Putative F-box protein At5g44220.